A 465-amino-acid polypeptide reads, in one-letter code: Ribulose bisphosphate carboxylase large chain (465 aa).

At lysine 4 the chain carries N6,N6,N6-trimethyllysine. Substrate contacts are provided by asparagine 113 and threonine 163. Lysine 165 (proton acceptor) is an active-site residue. Substrate is bound at residue lysine 167. Mg(2+) contacts are provided by lysine 191, aspartate 193, and glutamate 194. Lysine 191 carries the N6-carboxylysine modification. Histidine 284 (proton acceptor) is an active-site residue. The substrate site is built by arginine 285, histidine 317, and serine 369.

It belongs to the RuBisCO large chain family. Type I subfamily. As to quaternary structure, heterohexadecamer of 8 large chains and 8 small chains; disulfide-linked. The disulfide link is formed within the large subunit homodimers. The cofactor is Mg(2+). Post-translationally, the disulfide bond which can form in the large chain dimeric partners within the hexadecamer appears to be associated with oxidative stress and protein turnover.

It is found in the plastid. The protein resides in the chloroplast. It carries out the reaction 2 (2R)-3-phosphoglycerate + 2 H(+) = D-ribulose 1,5-bisphosphate + CO2 + H2O. It catalyses the reaction D-ribulose 1,5-bisphosphate + O2 = 2-phosphoglycolate + (2R)-3-phosphoglycerate + 2 H(+). In terms of biological role, ruBisCO catalyzes two reactions: the carboxylation of D-ribulose 1,5-bisphosphate, the primary event in carbon dioxide fixation, as well as the oxidative fragmentation of the pentose substrate in the photorespiration process. Both reactions occur simultaneously and in competition at the same active site. In Cassia fistula (Golden shower tree), this protein is Ribulose bisphosphate carboxylase large chain.